The sequence spans 811 residues: Exocyst complex component 6B (811 aa).

Residues 50 to 119 (MEKLETRIRN…LVIAMEELKQ (70 aa)) adopt a coiled-coil conformation. The disordered stretch occupies residues 260 to 280 (STSPKSEQDSGILDVEDEEDD).

It belongs to the SEC15 family. As to quaternary structure, the exocyst complex is composed of SEC3, SEC5, SEC6, SEC8, SEC10, SEC15, EXO70 and EXO84.

Component of the exocyst complex involved in the docking of exocytic vesicles with fusion sites on the plasma membrane. This is Exocyst complex component 6B (EXOC6B) from Homo sapiens (Human).